The primary structure comprises 94 residues: Aspartyl/glutamyl-tRNA(Asn/Gln) amidotransferase subunit C (94 aa).

It belongs to the GatC family. In terms of assembly, heterotrimer of A, B and C subunits.

The catalysed reaction is L-glutamyl-tRNA(Gln) + L-glutamine + ATP + H2O = L-glutaminyl-tRNA(Gln) + L-glutamate + ADP + phosphate + H(+). The enzyme catalyses L-aspartyl-tRNA(Asn) + L-glutamine + ATP + H2O = L-asparaginyl-tRNA(Asn) + L-glutamate + ADP + phosphate + 2 H(+). Its function is as follows. Allows the formation of correctly charged Asn-tRNA(Asn) or Gln-tRNA(Gln) through the transamidation of misacylated Asp-tRNA(Asn) or Glu-tRNA(Gln) in organisms which lack either or both of asparaginyl-tRNA or glutaminyl-tRNA synthetases. The reaction takes place in the presence of glutamine and ATP through an activated phospho-Asp-tRNA(Asn) or phospho-Glu-tRNA(Gln). This chain is Aspartyl/glutamyl-tRNA(Asn/Gln) amidotransferase subunit C, found in Syntrophomonas wolfei subsp. wolfei (strain DSM 2245B / Goettingen).